A 211-amino-acid polypeptide reads, in one-letter code: Transcriptional regulator GfcR (211 aa).

This sequence belongs to the purine/pyrimidine phosphoribosyltransferase family. GfcR subfamily.

Functionally, DNA-binding transcriptional regulator that functions as a regulator of central sugar catabolic pathways. This is Transcriptional regulator GfcR from Halorubrum lacusprofundi (strain ATCC 49239 / DSM 5036 / JCM 8891 / ACAM 34).